We begin with the raw amino-acid sequence, 556 residues long: Formate--tetrahydrofolate ligase (556 aa).

Residue 65-72 (TPAGEGKS) coordinates ATP.

The protein belongs to the formate--tetrahydrofolate ligase family.

It catalyses the reaction (6S)-5,6,7,8-tetrahydrofolate + formate + ATP = (6R)-10-formyltetrahydrofolate + ADP + phosphate. It functions in the pathway one-carbon metabolism; tetrahydrofolate interconversion. The chain is Formate--tetrahydrofolate ligase from Streptococcus mutans serotype c (strain ATCC 700610 / UA159).